Reading from the N-terminus, the 194-residue chain is Putative 3-methyladenine DNA glycosylase (194 aa).

It belongs to the DNA glycosylase MPG family.

This chain is Putative 3-methyladenine DNA glycosylase, found in Synechococcus elongatus (strain ATCC 33912 / PCC 7942 / FACHB-805) (Anacystis nidulans R2).